An 82-amino-acid polypeptide reads, in one-letter code: Large ribosomal subunit protein bL31 (82 aa).

Residues Cys16, Cys18, Cys37, and Cys40 each coordinate Zn(2+).

It belongs to the bacterial ribosomal protein bL31 family. Type A subfamily. Part of the 50S ribosomal subunit. The cofactor is Zn(2+).

In terms of biological role, binds the 23S rRNA. The sequence is that of Large ribosomal subunit protein bL31 from Blochmanniella pennsylvanica (strain BPEN).